Consider the following 676-residue polypeptide: Methionine--tRNA ligase (676 aa).

Positions proline 15–histidine 25 match the 'HIGH' region motif. Zn(2+) is bound by residues cysteine 146, cysteine 149, cysteine 159, and cysteine 162. The 'KMSKS' region motif lies at lysine 332–serine 336. ATP is bound at residue lysine 335. The region spanning aspartate 575–lysine 676 is the tRNA-binding domain.

The protein belongs to the class-I aminoacyl-tRNA synthetase family. MetG type 1 subfamily. As to quaternary structure, homodimer. The cofactor is Zn(2+).

It is found in the cytoplasm. It carries out the reaction tRNA(Met) + L-methionine + ATP = L-methionyl-tRNA(Met) + AMP + diphosphate. Its function is as follows. Is required not only for elongation of protein synthesis but also for the initiation of all mRNA translation through initiator tRNA(fMet) aminoacylation. The polypeptide is Methionine--tRNA ligase (Shewanella sp. (strain MR-7)).